The chain runs to 238 residues: MSNGIFIVGTDTDIGKTFVTGGILYLLRKNGVNASYFKAALSGAIKVNERLIPGDTKFVSDLSGLNEEYSFLTPYVFETAVSPHLASKIENIPINLEVIKSSYLKVKEKYDYIVAEGSGGIVCPMVHNEKSTILLEDIIKLLDLDTLLVASAGLGSINHTVLTVKYIENAGLNIKGIIVNGYDENNICHRDNVKMIKKLTSKDIIALIPRIKDNNNHKEIKKVFDDLDYKKIKKCIGA.

ATP is bound at residue 13-18 (DIGKTF). T17 contacts Mg(2+). Residue K38 is part of the active site. S42 contacts substrate. Residues D55, 116-119 (EGSG), 209-211 (PRI), and N216 each bind ATP. Mg(2+)-binding residues include D55 and E116.

The protein belongs to the dethiobiotin synthetase family. In terms of assembly, homodimer. The cofactor is Mg(2+).

The protein localises to the cytoplasm. It carries out the reaction (7R,8S)-7,8-diammoniononanoate + CO2 + ATP = (4R,5S)-dethiobiotin + ADP + phosphate + 3 H(+). The protein operates within cofactor biosynthesis; biotin biosynthesis; biotin from 7,8-diaminononanoate: step 1/2. Catalyzes a mechanistically unusual reaction, the ATP-dependent insertion of CO2 between the N7 and N8 nitrogen atoms of 7,8-diaminopelargonic acid (DAPA, also called 7,8-diammoniononanoate) to form a ureido ring. The polypeptide is ATP-dependent dethiobiotin synthetase BioD (Clostridium novyi (strain NT)).